Consider the following 335-residue polypeptide: Acetyl-coenzyme A carboxylase carboxyl transferase subunit alpha (335 aa).

Positions 40–294 constitute a CoA carboxyltransferase C-terminal domain; the sequence is QLETLATRRR…KEAIEKHLDT (255 aa).

It belongs to the AccA family. As to quaternary structure, acetyl-CoA carboxylase is a heterohexamer composed of biotin carboxyl carrier protein (AccB), biotin carboxylase (AccC) and two subunits each of ACCase subunit alpha (AccA) and ACCase subunit beta (AccD).

It is found in the cytoplasm. It carries out the reaction N(6)-carboxybiotinyl-L-lysyl-[protein] + acetyl-CoA = N(6)-biotinyl-L-lysyl-[protein] + malonyl-CoA. It participates in lipid metabolism; malonyl-CoA biosynthesis; malonyl-CoA from acetyl-CoA: step 1/1. Component of the acetyl coenzyme A carboxylase (ACC) complex. First, biotin carboxylase catalyzes the carboxylation of biotin on its carrier protein (BCCP) and then the CO(2) group is transferred by the carboxyltransferase to acetyl-CoA to form malonyl-CoA. In Prochlorococcus marinus (strain MIT 9312), this protein is Acetyl-coenzyme A carboxylase carboxyl transferase subunit alpha.